We begin with the raw amino-acid sequence, 240 residues long: Ribonuclease HII (240 aa).

In terms of domain architecture, RNase H type-2 spans 33–222 (GPVAGVDEVG…VRRIVTRSNT (190 aa)). A divalent metal cation is bound by residues Asp39, Glu40, and Asp131.

This sequence belongs to the RNase HII family. Mn(2+) is required as a cofactor. Mg(2+) serves as cofactor.

It is found in the cytoplasm. It carries out the reaction Endonucleolytic cleavage to 5'-phosphomonoester.. Its function is as follows. Endonuclease that specifically degrades the RNA of RNA-DNA hybrids. This is Ribonuclease HII from Mycobacterium leprae (strain Br4923).